Consider the following 853-residue polypeptide: MAVSLTEGVVMKMLNGEVTSETDMMPVLQVTELKLIQSKLHQNQESSNRYKFLLSDGTDLAAGMLNTSLNSLVNQGTIQLGSVIRLTHYICNLIQTRRIVVIMQLEVIVEKCNIIGNPKEPGHSSINPQRGGVNTQSNGGSEQQQARRSDVNGGRYGVSANSPQPQVVHNSSDAGRYCVSANSPQPQVVHSSSDAGRYGVSANSPQRQVVHNSPDAGRYGQPQVSQRYGTGSGYPETSPSTRPYVSSNAGYGGSRQDQPRAPTATTAYSRPVQSAYQPQQPPMYVNRGPVARNEAPPRINPIAALNPYQGRWTIKVRVTSKADLRRFNNPRGEGKLFSFDLLDADGGEIRVTCFNDAVDQFFDKIVVGNVYLISRGNLKPAQKNFNHLPNDYEIHLDSASTIQPCEDDGTIPRYHFHFRNIGDIENMENNSTTDVIGIVSSISPTVAIMRKNLTEVQKRSLQLKDMSGRSVEVTMWGNFCNAEGQKLQNLCDSGVFPVLALKAGRIGEFNGKQVSTIGASQFFIEPDFPEARELRQWYEREGRNAHFTSISREFSGVGRQEVRKVIAQIKDEKLGTSEKPDWITVCATISFMKVENFCYTACPIMNGDRPCSKKVTNNGDGTWRCEKCDKCVDECDYRYILQIQLQDHTDLTWATAFQEAGEEIMGMSAKDLYYVKYENQDEEKFEDIIRSVAFTKYIFKLKIKEETYSDEQRVKATVVKAEKLNYSSNTRFMLEAIDKLKIGDANSLPIKAESSNYRSDAFNSGVGTSGTRDTASVDARREFGLPAANQVGQYGNQYSSDARSLGGFTSCNVCRSNSHVSANCPTLMSEPQGQYMGGTNAGGGMPRQHVGSY.

Residues 118–282 (PKEPGHSSIN…QSAYQPQQPP (165 aa)) are disordered. 6 stretches are compositionally biased toward polar residues: residues 124 to 144 (SSINPQRGGVNTQSNGGSEQQ), 159 to 173 (SANSPQPQVVHNSSD), 180 to 194 (SANSPQPQVVHSSSD), 201 to 211 (SANSPQRQVVH), 222 to 249 (PQVSQRYGTGSGYPETSPSTRPYVSSNA), and 263 to 278 (TATTAYSRPVQSAYQP). The OB DNA-binding region spans 312–399 (WTIKVRVTSK…NDYEIHLDSA (88 aa)). The C4-type zinc-finger motif lies at 602–628 (CPIMNGDRPCSKKVTNNGDGTWRCEKC).

The protein belongs to the replication factor A protein 1 family. Heterotrimer of RPA1, RPA2 and RPA3 (canonical replication protein A complex).

The protein localises to the nucleus. Functionally, component of the replication protein A complex (RPA) required for DNA recombination, repair and replication. The activity of RPA is mediated by single-stranded DNA binding and protein interactions. Probably involved in repair of double-strand DNA breaks (DSBs) induced by genotoxic stresses. The polypeptide is Replication protein A 70 kDa DNA-binding subunit C (RPA1C) (Arabidopsis thaliana (Mouse-ear cress)).